The sequence spans 368 residues: Agmatine deiminase (368 aa).

Residue cysteine 357 is the Amidino-cysteine intermediate of the active site.

Belongs to the agmatine deiminase family. In terms of assembly, homodimer.

It catalyses the reaction agmatine + H2O = N-carbamoylputrescine + NH4(+). Its pathway is amine and polyamine biosynthesis; putrescine biosynthesis via agmatine pathway; N-carbamoylputrescine from agmatine: step 1/1. Its function is as follows. Mediates the hydrolysis of agmatine into N-carbamoylputrescine in the arginine decarboxylase (ADC) pathway of putrescine biosynthesis, a basic polyamine. This is Agmatine deiminase from Ectopseudomonas mendocina (strain ymp) (Pseudomonas mendocina).